The primary structure comprises 1441 residues: ABC transporter G family member 51 (1441 aa).

The segment at 52-71 is disordered; sequence VLPDPDGLGGGDGGGRGEGQ. The span at 58-69 shows a compositional bias: gly residues; it reads GLGGGDGGGRGE. The ABC transporter 1 domain maps to 154–428; it reads LISSHLLRPD…FKSLGFSLPP (275 aa). ATP is bound at residue 187–194; it reads GPPASGKS. Residues 505–718 enclose the ABC transmembrane type-2 1 domain; that stretch reads SLVRACFARE…AQRAVSVNEF (214 aa). The next 6 membrane-spanning stretches (helical) occupy residues 523 to 543, 558 to 578, 615 to 635, 642 to 662, 668 to 688, and 751 to 771; these read FLYT…STLF, LYLA…FTEM, FIEA…APTV, MLLL…MGAI, IAST…GFVV, and FWIG…MFTL. An ABC transporter 2 domain is found at 838-1090; that stretch reads MTFHNVNYYV…DMINYFQGIP (253 aa). 883 to 890 serves as a coordination point for ATP; it reads GASGSGKT. The ABC transmembrane type-2 2 domain maps to 1163–1380; it reads TQFMVCLRKQ…TLRGVITSQL (218 aa). A run of 7 helical transmembrane segments spans residues 1184–1204, 1214–1234, 1271–1291, 1300–1320, 1330–1350, 1355–1375, and 1413–1433; these read VVRL…FWNV, ILLL…NNAS, VEIP…YFMV, LVLY…YGMV, MASV…GFLI, IPGW…LRGV, and ATVA…AISI.

Belongs to the ABC transporter superfamily. ABCG family. PDR (TC 3.A.1.205) subfamily.

Its subcellular location is the membrane. Its function is as follows. May be a general defense protein. The chain is ABC transporter G family member 51 from Oryza sativa subsp. japonica (Rice).